Reading from the N-terminus, the 581-residue chain is Multidrug resistance-like ATP-binding protein MdlA (581 aa).

Residues 18-303 enclose the ABC transmembrane type-1 domain; sequence YLGSIILLII…LAWMFNIVER (286 aa). 6 consecutive transmembrane segments (helical) span residues 23–43, 53–73, 127–149, 153–175, 247–267, and 280–300; these read ILLI…GILI, GFEI…VYIL, VVFA…ISVL, ITQI…AILI, VIYL…GWLV, and FIMY…MFNI. The 235-residue stretch at 337 to 571 folds into the ABC transporter domain; sequence INIDMFFYPK…KNWYKSMYDH (235 aa). Position 369–376 (369–376) interacts with ATP; the sequence is GPTGAGKS.

The protein belongs to the ABC transporter superfamily. Drug exporter-2 (TC 3.A.1.117) family.

It is found in the cell membrane. It carries out the reaction ATP + H2O + xenobioticSide 1 = ADP + phosphate + xenobioticSide 2.. The protein is Multidrug resistance-like ATP-binding protein MdlA (mdlA) of Buchnera aphidicola subsp. Schizaphis graminum (strain Sg).